Reading from the N-terminus, the 567-residue chain is Arginine--tRNA ligase (567 aa).

The 'HIGH' region signature appears at 128–138; it reads ANPTGPLHVGH.

Belongs to the class-I aminoacyl-tRNA synthetase family. As to quaternary structure, monomer.

Its subcellular location is the cytoplasm. It carries out the reaction tRNA(Arg) + L-arginine + ATP = L-arginyl-tRNA(Arg) + AMP + diphosphate. The sequence is that of Arginine--tRNA ligase from Acidovorax ebreus (strain TPSY) (Diaphorobacter sp. (strain TPSY)).